Consider the following 166-residue polypeptide: Regulatory protein RecX (166 aa).

Belongs to the RecX family.

It is found in the cytoplasm. Modulates RecA activity. The chain is Regulatory protein RecX from Klebsiella pneumoniae subsp. pneumoniae (strain ATCC 700721 / MGH 78578).